We begin with the raw amino-acid sequence, 539 residues long: MSVKGITPQELAAYGIHNVSEIVYNPSYDLLFEEETKPTLEGYERGTLTTTGAIAVDTGIFTGRSPKDKYIVRDAITQDTVWWADQGKGKNDNKPLSQEIWSHLKGLVTEQLSGKRLFVVDTFCGANADTRLQVRFITEVAWQAHFVKNMFIRPSDEELARFEPDFIVMNGAKCTNPQWKEQGLNSENFVAFNLTERMQLIGGTWYGGEMKKGMFSMMNYLLPLKGIASMHCSANVGEKGDVAIFFGLSGTGKTTLSTDPKRKLIGDDEHGWDDDGVFNFEGGCYAKTIKLSEEAEPDIYHAIKRDALLENVVVLADGTVDFNDGSKTENTRVSYPIYHIDNIVKPVSKAGHATKVIFLTADAFGVLPPVSRLTANQTQYHFLSGFTAKLAGTERGVTEPTPTFSACFGAAFLSLHPTQYAEVLVKRMQAVGAQAYLVNTGWNGTGKRISIKDTRAIIDAILNGEIDKAETFTLPIFDLAVPMALPGVNPDILDPRDTYADKAQWQEKAEDLAKRFATNFDKYTDTPAGAALVSAGPKI.

The substrate site is built by arginine 64, tyrosine 206, and lysine 212. ATP-binding positions include lysine 212, histidine 231, and glycine 247–threonine 255. 2 residues coordinate Mn(2+): lysine 212 and histidine 231. Aspartate 268 lines the Mn(2+) pocket. Residues glutamate 296, arginine 332, arginine 448 to isoleucine 449, and threonine 454 contribute to the ATP site. Arginine 332 contacts substrate.

This sequence belongs to the phosphoenolpyruvate carboxykinase (ATP) family. As to quaternary structure, monomer. The cofactor is Mn(2+).

It localises to the cytoplasm. The enzyme catalyses oxaloacetate + ATP = phosphoenolpyruvate + ADP + CO2. It participates in carbohydrate biosynthesis; gluconeogenesis. Its function is as follows. Involved in the gluconeogenesis. Catalyzes the conversion of oxaloacetate (OAA) to phosphoenolpyruvate (PEP) through direct phosphoryl transfer between the nucleoside triphosphate and OAA. This is Phosphoenolpyruvate carboxykinase (ATP) from Yersinia pseudotuberculosis serotype IB (strain PB1/+).